The primary structure comprises 648 residues: Serine/threonine-protein phosphatase 1 regulatory subunit PIG1 (648 aa).

Positions 20–51 (STSSFVSSTTSNSFSPLEDSTSASSSTSSSSS) are enriched in low complexity. A disordered region spans residues 20 to 52 (STSSFVSSTTSNSFSPLEDSTSASSSTSSSSSG). The region spanning 201-331 (HSLELSDPVS…NNDYKNYEIT (131 aa)) is the CBM21 domain. The segment covering 593–609 (RESSSPEISPLNTTTSL) has biased composition (polar residues). The tract at residues 593 to 629 (RESSSPEISPLNTTTSLPFFPGDNMSDSSGEYEERTS) is disordered.

Functionally, regulates the activity of glycogen synthase. It is most probably a regulatory subunit for protein phosphatase type 1. The protein is Serine/threonine-protein phosphatase 1 regulatory subunit PIG1 (PIG1) of Saccharomyces cerevisiae (strain ATCC 204508 / S288c) (Baker's yeast).